The sequence spans 766 residues: Deoxynucleotidyltransferase terminal-interacting protein 2 (766 aa).

A disordered region spans residues 1-99 (MVVTRSARPQ…DCSSVPEVQD (99 aa)). Composition is skewed to polar residues over residues 13–28 (NEATSVESLRQKNSAV) and 42–56 (SPDNPNTTESQTTPE). Thr127 is modified (phosphothreonine). 3 positions are modified to phosphoserine: Ser139, Ser143, and Ser146. The tract at residues 155 to 175 (TEITTRRSKAKSQREPKQESH) is disordered. Over residues 166-175 (SQREPKQESH) the composition is skewed to basic and acidic residues. Phosphoserine is present on residues Ser180 and Ser190. A Glycyl lysine isopeptide (Lys-Gly) (interchain with G-Cter in SUMO2) cross-link involves residue Lys217. Residue Thr229 is modified to Phosphothreonine. Ser236, Ser248, and Ser250 each carry phosphoserine. Lys254 is covalently cross-linked (Glycyl lysine isopeptide (Lys-Gly) (interchain with G-Cter in SUMO2)). Position 258 is a phosphoserine (Ser258). Lys327 participates in a covalent cross-link: Glycyl lysine isopeptide (Lys-Gly) (interchain with G-Cter in SUMO2). Ser334 is modified (phosphoserine). Disordered stretches follow at residues 345–367 (VSQRHSTPESDKTTSESSTLNHE), 390–450 (KNAI…KDDS), and 520–557 (KAGEVATEEEEEEEEEESEEELSDHDRNKDNEFSDEDN). A Glycyl lysine isopeptide (Lys-Gly) (interchain with G-Cter in SUMO2) cross-link involves residue Lys394. Over residues 421-434 (DMSKEKEVDSESDT) the composition is skewed to basic and acidic residues. Residues 435 to 444 (KPSNLEFNTT) show a composition bias toward polar residues. Positions 515-552 (LDEEDKAGEVATEEEEEEEEEESEEELSDHDRNKDNEF) form a coiled coil. Residues 520–542 (KAGEVATEEEEEEEEEESEEELS) show a composition bias toward acidic residues. The tract at residues 558–615 (LLSNTKSKLLKLMSSSIDTGLNIKELGGLYINFNADKVQLNKRTLTQMKEKRKDELLQ) is tdBR region; mediates interaction with DNTT. Glycyl lysine isopeptide (Lys-Gly) (interchain with G-Cter in SUMO2) cross-links involve residues Lys568, Lys594, and Lys616. The residue at position 620 (Thr620) is a Phosphothreonine. Glycyl lysine isopeptide (Lys-Gly) (interchain with G-Cter in SUMO2) cross-links involve residues Lys636, Lys659, Lys668, Lys696, and Lys741.

In terms of assembly, forms a ternary complex with DNTT and core histone; interaction with PCNA releases DNTT and H2A/H2B histones from this ternary complex. Interacts with ESR1, ESR2, PPARG and RXRA. Part of the small subunit (SSU) processome, composed of more than 70 proteins and the RNA chaperone small nucleolar RNA (snoRNA) U3.

Its subcellular location is the nucleus. The protein resides in the nucleolus. Its function is as follows. Regulates the transcriptional activity of DNTT and ESR1. May function as a chromatin remodeling protein. Part of the small subunit (SSU) processome, first precursor of the small eukaryotic ribosomal subunit. During the assembly of the SSU processome in the nucleolus, many ribosome biogenesis factors, an RNA chaperone and ribosomal proteins associate with the nascent pre-rRNA and work in concert to generate RNA folding, modifications, rearrangements and cleavage as well as targeted degradation of pre-ribosomal RNA by the RNA exosome. The protein is Deoxynucleotidyltransferase terminal-interacting protein 2 (DNTTIP2) of Bos taurus (Bovine).